An 89-amino-acid chain; its full sequence is Cell division topological specificity factor (89 aa).

This sequence belongs to the MinE family.

Its function is as follows. Prevents the cell division inhibition by proteins MinC and MinD at internal division sites while permitting inhibition at polar sites. This ensures cell division at the proper site by restricting the formation of a division septum at the midpoint of the long axis of the cell. This Yersinia pestis bv. Antiqua (strain Angola) protein is Cell division topological specificity factor.